The chain runs to 102 residues: NADH-quinone oxidoreductase subunit K 2 (102 aa).

The next 3 helical transmembrane spans lie at 1 to 21 (MIVPLLHILILAGILFVLGLV), 30 to 50 (IIMMLIGIEIMLNAAMLAFVG), and 65 to 85 (LMIMAMTSAEVSLALALVVYL).

This sequence belongs to the complex I subunit 4L family. As to quaternary structure, NDH-1 is composed of 14 different subunits. Subunits NuoA, H, J, K, L, M, N constitute the membrane sector of the complex.

The protein localises to the cell inner membrane. The enzyme catalyses a quinone + NADH + 5 H(+)(in) = a quinol + NAD(+) + 4 H(+)(out). Its function is as follows. NDH-1 shuttles electrons from NADH, via FMN and iron-sulfur (Fe-S) centers, to quinones in the respiratory chain. The immediate electron acceptor for the enzyme in this species is believed to be ubiquinone. Couples the redox reaction to proton translocation (for every two electrons transferred, four hydrogen ions are translocated across the cytoplasmic membrane), and thus conserves the redox energy in a proton gradient. This chain is NADH-quinone oxidoreductase subunit K 2, found in Geotalea daltonii (strain DSM 22248 / JCM 15807 / FRC-32) (Geobacter daltonii).